A 101-amino-acid polypeptide reads, in one-letter code: Small ribosomal subunit protein uS14 (101 aa).

Belongs to the universal ribosomal protein uS14 family. As to quaternary structure, part of the 30S ribosomal subunit. Contacts proteins S3 and S10.

Functionally, binds 16S rRNA, required for the assembly of 30S particles and may also be responsible for determining the conformation of the 16S rRNA at the A site. The polypeptide is Small ribosomal subunit protein uS14 (Baumannia cicadellinicola subsp. Homalodisca coagulata).